Consider the following 446-residue polypeptide: tRNA-2-methylthio-N(6)-dimethylallyladenosine synthase (446 aa).

The MTTase N-terminal domain occupies 3–120 (KKLFIETHGC…LPEMIDAARS (118 aa)). The [4Fe-4S] cluster site is built by Cys-12, Cys-49, Cys-83, Cys-157, Cys-161, and Cys-164. Residues 143–375 (RVDGPTAFVS…QGRIHQQGYE (233 aa)) form the Radical SAM core domain. In terms of domain architecture, TRAM spans 378-442 (RRMVGSTQRI…PHSLRGTLIE (65 aa)).

The protein belongs to the methylthiotransferase family. MiaB subfamily. As to quaternary structure, monomer. [4Fe-4S] cluster serves as cofactor.

It localises to the cytoplasm. It carries out the reaction N(6)-dimethylallyladenosine(37) in tRNA + (sulfur carrier)-SH + AH2 + 2 S-adenosyl-L-methionine = 2-methylsulfanyl-N(6)-dimethylallyladenosine(37) in tRNA + (sulfur carrier)-H + 5'-deoxyadenosine + L-methionine + A + S-adenosyl-L-homocysteine + 2 H(+). In terms of biological role, catalyzes the methylthiolation of N6-(dimethylallyl)adenosine (i(6)A), leading to the formation of 2-methylthio-N6-(dimethylallyl)adenosine (ms(2)i(6)A) at position 37 in tRNAs that read codons beginning with uridine. This chain is tRNA-2-methylthio-N(6)-dimethylallyladenosine synthase, found in Pseudomonas paraeruginosa (strain DSM 24068 / PA7) (Pseudomonas aeruginosa (strain PA7)).